The following is a 412-amino-acid chain: Lipoyl synthase, mitochondrial (412 aa).

Residues 1–28 constitute a mitochondrion transit peptide; the sequence is MASIAPSLKRAHAPLRKALTASSTIRAF. [4Fe-4S] cluster contacts are provided by Cys124, Cys129, Cys135, Cys155, Cys159, Cys162, and Ser372. Residues 138–361 enclose the Radical SAM core domain; the sequence is GSDKNAATAT…NKRALDMGFL (224 aa).

Belongs to the radical SAM superfamily. Lipoyl synthase family. [4Fe-4S] cluster is required as a cofactor.

Its subcellular location is the mitochondrion. The enzyme catalyses [[Fe-S] cluster scaffold protein carrying a second [4Fe-4S](2+) cluster] + N(6)-octanoyl-L-lysyl-[protein] + 2 oxidized [2Fe-2S]-[ferredoxin] + 2 S-adenosyl-L-methionine + 4 H(+) = [[Fe-S] cluster scaffold protein] + N(6)-[(R)-dihydrolipoyl]-L-lysyl-[protein] + 4 Fe(3+) + 2 hydrogen sulfide + 2 5'-deoxyadenosine + 2 L-methionine + 2 reduced [2Fe-2S]-[ferredoxin]. It functions in the pathway protein modification; protein lipoylation via endogenous pathway; protein N(6)-(lipoyl)lysine from octanoyl-[acyl-carrier-protein]: step 2/2. Functionally, catalyzes the radical-mediated insertion of two sulfur atoms into the C-6 and C-8 positions of the octanoyl moiety bound to the lipoyl domains of lipoate-dependent enzymes, thereby converting the octanoylated domains into lipoylated derivatives. The polypeptide is Lipoyl synthase, mitochondrial (Fusarium vanettenii (strain ATCC MYA-4622 / CBS 123669 / FGSC 9596 / NRRL 45880 / 77-13-4) (Fusarium solani subsp. pisi)).